The sequence spans 406 residues: Kelch domain-containing protein 1 (406 aa).

Kelch repeat units follow at residues 24 to 76, 80 to 134, 135 to 181, 208 to 258, 260 to 307, and 311 to 361; these read FLYV…CGAC, RLYV…VYKD, RLIY…TKTR, KGYV…AITD, KLFL…ACLG, and EIMV…LKSQ.

In terms of assembly, component of a CRL5 E3 ubiquitin-protein ligase complex, also named ECS (Elongin BC-CUL2/5-SOCS-box protein) complex, composed of CUL5, Elongin BC (ELOB and ELOC), RBX1 and substrate-specific adapter KLHDC1.

The protein resides in the cytoplasm. It localises to the cytosol. The protein operates within protein modification; protein ubiquitination. Functionally, substrate-recognition component of a Cul5-RING (CRL5) E3 ubiquitin-protein ligase complex of the DesCEND (destruction via C-end degrons) pathway, which recognizes a C-degron located at the extreme C terminus of target proteins, leading to their ubiquitination and degradation. The C-degron recognized by the DesCEND pathway is usually a motif of less than ten residues and can be present in full-length proteins, truncated proteins or proteolytically cleaved forms. The CRL5(KLHDC1) complex mediates ubiquitination and degradation of truncated SELENOS selenoprotein produced by failed UGA/Sec decoding, which ends with a glycine. The chain is Kelch domain-containing protein 1 from Mus musculus (Mouse).